Here is a 487-residue protein sequence, read N- to C-terminus: Dihydrofolate synthase/folylpolyglutamate synthase (487 aa).

44 to 46 (DPS) lines the 7,8-dihydropteroate pocket. Position 74-77 (74-77 (GKTS)) interacts with ATP. Residues T76 and S98 each contribute to the Mg(2+) site. Residue 150-153 (SKFE) coordinates 7,8-dihydropteroate. Position 174 (E174) interacts with Mg(2+). Residue 181-183 (WDA) coordinates 7,8-dihydropteroate. Residues H201 and D203 each contribute to the Mg(2+) site. ATP is bound by residues N301, R338, and 351–354 (DAAH). D384 is a binding site for Mg(2+).

Belongs to the folylpolyglutamate synthase family. Monomer. Mg(2+) is required as a cofactor.

It carries out the reaction 7,8-dihydropteroate + L-glutamate + ATP = 7,8-dihydrofolate + ADP + phosphate + H(+). The catalysed reaction is (6S)-5,6,7,8-tetrahydrofolyl-(gamma-L-Glu)(n) + L-glutamate + ATP = (6S)-5,6,7,8-tetrahydrofolyl-(gamma-L-Glu)(n+1) + ADP + phosphate + H(+). It participates in cofactor biosynthesis; tetrahydrofolate biosynthesis; 7,8-dihydrofolate from 2-amino-4-hydroxy-6-hydroxymethyl-7,8-dihydropteridine diphosphate and 4-aminobenzoate: step 2/2. The protein operates within cofactor biosynthesis; tetrahydrofolylpolyglutamate biosynthesis. Its function is as follows. Catalyzes the addition of a glutamate residue to dihydropteroate (7,8-dihydropteroate or H2Pte) to form dihydrofolate (7,8-dihydrofolate monoglutamate or H2Pte-Glu). Also catalyzes successive additions of L-glutamate to tetrahydrofolate, leading to folylpolyglutamate derivatives. Is involved in the bioactivation of the antituberculous drug para-aminosalicylic acid (PAS). Is able to use hydroxy-dihydropteroate (H2PtePAS) as substrate, which is the product formed by the action of DHPS (FolP1) on PAS, leading to hydroxy-dihydrofolate (H2PtePAS-Glu). This compound inhibits dihydrofolate reductase DHFR (DfrA), the next enzyme in the folate pathway, and thus disrupts the folate-dependent metabolic pathways. The chain is Dihydrofolate synthase/folylpolyglutamate synthase from Mycobacterium tuberculosis (strain ATCC 25618 / H37Rv).